We begin with the raw amino-acid sequence, 436 residues long: Acetyl-CoA decarbonylase/synthase complex subunit delta 1 (436 aa).

This sequence belongs to the CdhD family. As to quaternary structure, heterodimer of delta and gamma chains. The ACDS complex is made up of alpha, epsilon, beta, gamma and delta chains with a probable stoichiometry of (alpha(2)epsilon(2))(4)-beta(8)-(gamma(1)delta(1))(8) (Potential).

Its pathway is one-carbon metabolism; methanogenesis from acetate. Functionally, part of a complex that catalyzes the reversible cleavage of acetyl-CoA, allowing growth on acetate as sole source of carbon and energy. Probably maintains the overall quaternary structure of the ACDS complex. The polypeptide is Acetyl-CoA decarbonylase/synthase complex subunit delta 1 (cdhD1) (Methanosarcina thermophila).